A 414-amino-acid polypeptide reads, in one-letter code: Isocitrate dehydrogenase [NADP] cytoplasmic (414 aa).

S2 is subject to N-acetylserine. Y42 bears the Phosphotyrosine mark. Residue 75–77 coordinates NADP(+); it reads TIT. Residue T77 participates in substrate binding. K81 carries the N6-acetyllysine modification. R82 lines the NADP(+) pocket. Substrate is bound by residues 94 to 100 and R109; that span reads SPNGTIR. K126 carries the N6-succinyllysine modification. R132 and K212 together coordinate substrate. Residues K224, K233, and K243 each carry the N6-acetyllysine modification. D252 lines the Mn(2+) pocket. Residue K260 participates in NADP(+) binding. Positions 275 and 279 each coordinate Mn(2+). Position 310–315 (310–315) interacts with NADP(+); it reads GTVTRH. K321 is modified (N6-acetyllysine). Residue N328 coordinates NADP(+). At S389 the chain carries Phosphoserine. An N6-succinyllysine modification is found at K400.

This sequence belongs to the isocitrate and isopropylmalate dehydrogenases family. Homodimer. Mg(2+) is required as a cofactor. It depends on Mn(2+) as a cofactor. Acetylation at Lys-374 dramatically reduces catalytic activity.

The protein resides in the cytoplasm. Its subcellular location is the cytosol. The enzyme catalyses D-threo-isocitrate + NADP(+) = 2-oxoglutarate + CO2 + NADPH. Functionally, catalyzes the NADP(+)-dependent oxidative decarboxylation of isocitrate (D-threo-isocitrate) to 2-ketoglutarate (2-oxoglutarate), which is required by other enzymes such as the phytanoyl-CoA dioxygenase. Plays a critical role in the generation of NADPH, an important cofactor in many biosynthesis pathways. May act as a corneal epithelial crystallin and may be involved in maintaining corneal epithelial transparency. In Microtus mexicanus (Mexican vole), this protein is Isocitrate dehydrogenase [NADP] cytoplasmic (IDH1).